Consider the following 351-residue polypeptide: UDP-3-O-acylglucosamine N-acyltransferase (351 aa).

The Proton acceptor role is filled by histidine 257.

Belongs to the transferase hexapeptide repeat family. LpxD subfamily. Homotrimer.

The enzyme catalyses a UDP-3-O-[(3R)-3-hydroxyacyl]-alpha-D-glucosamine + a (3R)-hydroxyacyl-[ACP] = a UDP-2-N,3-O-bis[(3R)-3-hydroxyacyl]-alpha-D-glucosamine + holo-[ACP] + H(+). The protein operates within bacterial outer membrane biogenesis; LPS lipid A biosynthesis. In terms of biological role, catalyzes the N-acylation of UDP-3-O-acylglucosamine using 3-hydroxyacyl-ACP as the acyl donor. Is involved in the biosynthesis of lipid A, a phosphorylated glycolipid that anchors the lipopolysaccharide to the outer membrane of the cell. The sequence is that of UDP-3-O-acylglucosamine N-acyltransferase from Methylorubrum extorquens (strain PA1) (Methylobacterium extorquens).